A 150-amino-acid polypeptide reads, in one-letter code: Transcriptional regulator MraZ (150 aa).

SpoVT-AbrB domains lie at 7–55 (SHAI…PEPE) and 84–127 (AALM…SEES).

It belongs to the MraZ family. Forms oligomers.

It localises to the cytoplasm. The protein localises to the nucleoid. The polypeptide is Transcriptional regulator MraZ (Marinobacter nauticus (strain ATCC 700491 / DSM 11845 / VT8) (Marinobacter aquaeolei)).